The sequence spans 513 residues: Cobyric acid synthase (513 aa).

The 206-residue stretch at 252 to 457 folds into the GATase cobBQ-type domain; it reads KIDIAVIRLP…LHGIFDEEGI (206 aa). The active-site Nucleophile is the Cys-333. His-449 is an active-site residue.

Belongs to the CobB/CobQ family. CobQ subfamily.

Its pathway is cofactor biosynthesis; adenosylcobalamin biosynthesis. In terms of biological role, catalyzes amidations at positions B, D, E, and G on adenosylcobyrinic A,C-diamide. NH(2) groups are provided by glutamine, and one molecule of ATP is hydrogenolyzed for each amidation. The sequence is that of Cobyric acid synthase from Lachnoclostridium phytofermentans (strain ATCC 700394 / DSM 18823 / ISDg) (Clostridium phytofermentans).